The primary structure comprises 54 residues: UPF0391 membrane protein PFL_0093 (54 aa).

2 helical membrane-spanning segments follow: residues 4–24 and 29–49; these read WAITFLIIAIVAAVLGFGGIA and GIAKILFVVFLVMFIASFFFG.

The protein belongs to the UPF0391 family.

The protein localises to the cell membrane. This is UPF0391 membrane protein PFL_0093 from Pseudomonas fluorescens (strain ATCC BAA-477 / NRRL B-23932 / Pf-5).